We begin with the raw amino-acid sequence, 378 residues long: Putative UDP-N-acetylglucosamine 2-epimerase (378 aa).

It belongs to the UDP-N-acetylglucosamine 2-epimerase family.

It localises to the cytoplasm. It carries out the reaction UDP-N-acetyl-alpha-D-glucosamine = UDP-N-acetyl-alpha-D-mannosamine. The sequence is that of Putative UDP-N-acetylglucosamine 2-epimerase from Thermotoga maritima (strain ATCC 43589 / DSM 3109 / JCM 10099 / NBRC 100826 / MSB8).